Reading from the N-terminus, the 385-residue chain is Protein pelota homolog (385 aa).

The protein belongs to the eukaryotic release factor 1 family. Pelota subfamily. Component of the Pelota-HBS1L complex, also named Dom34-Hbs1 complex, composed of PELO and HBS1L. The cofactor is a divalent metal cation.

It localises to the cytoplasm. Component of the Pelota-HBS1L complex, a complex that recognizes stalled ribosomes and triggers the No-Go Decay (NGD) pathway. In the Pelota-HBS1L complex, PELO recognizes ribosomes stalled at the 3' end of an mRNA and engages stalled ribosomes by destabilizing mRNA in the mRNA channel. Following mRNA extraction from stalled ribosomes by the SKI complex, the Pelota-HBS1L complex promotes recruitment of ABCE1, which drives the disassembly of stalled ribosomes, followed by degradation of damaged mRNAs as part of the NGD pathway. The protein is Protein pelota homolog (PELO) of Gallus gallus (Chicken).